Here is a 180-residue protein sequence, read N- to C-terminus: Ribulose bisphosphate carboxylase small subunit, chloroplastic 5 (180 aa).

Residues methionine 1–arginine 56 constitute a chloroplast transit peptide.

This sequence belongs to the RuBisCO small chain family. As to quaternary structure, heterohexadecamer of 8 large and 8 small subunits.

It localises to the plastid. The protein resides in the chloroplast. Its function is as follows. RuBisCO catalyzes two reactions: the carboxylation of D-ribulose 1,5-bisphosphate, the primary event in carbon dioxide fixation, as well as the oxidative fragmentation of the pentose substrate. Both reactions occur simultaneously and in competition at the same active site. Although the small subunit is not catalytic it is essential for maximal activity. In Solanum tuberosum (Potato), this protein is Ribulose bisphosphate carboxylase small subunit, chloroplastic 5.